A 150-amino-acid polypeptide reads, in one-letter code: 3-hydroxyacyl-[acyl-carrier-protein] dehydratase FabZ (150 aa).

Residue histidine 54 is part of the active site.

Belongs to the thioester dehydratase family. FabZ subfamily.

Its subcellular location is the cytoplasm. The catalysed reaction is a (3R)-hydroxyacyl-[ACP] = a (2E)-enoyl-[ACP] + H2O. Its function is as follows. Involved in unsaturated fatty acids biosynthesis. Catalyzes the dehydration of short chain beta-hydroxyacyl-ACPs and long chain saturated and unsaturated beta-hydroxyacyl-ACPs. The polypeptide is 3-hydroxyacyl-[acyl-carrier-protein] dehydratase FabZ (Aliivibrio fischeri (strain ATCC 700601 / ES114) (Vibrio fischeri)).